Consider the following 180-residue polypeptide: Large ribosomal subunit protein uL5 (180 aa).

The protein belongs to the universal ribosomal protein uL5 family. Part of the 50S ribosomal subunit; part of the 5S rRNA/L5/L18/L25 subcomplex. Contacts the 5S rRNA and the P site tRNA. Forms a bridge to the 30S subunit in the 70S ribosome.

Functionally, this is one of the proteins that bind and probably mediate the attachment of the 5S RNA into the large ribosomal subunit, where it forms part of the central protuberance. In the 70S ribosome it contacts protein S13 of the 30S subunit (bridge B1b), connecting the 2 subunits; this bridge is implicated in subunit movement. Contacts the P site tRNA; the 5S rRNA and some of its associated proteins might help stabilize positioning of ribosome-bound tRNAs. The polypeptide is Large ribosomal subunit protein uL5 (Gloeothece citriformis (strain PCC 7424) (Cyanothece sp. (strain PCC 7424))).